The primary structure comprises 1617 residues: MIPHSSAGVQSWGQPLYAVYTGTGRADLSQPLGQPDRQSEQPSMPVAQTQGRPPALIDLTANDGDVLEREPPAKRLKIDVHAGSVANDGSPASAGVGESKSTPGATTSKPPSLSWRARPVWSFQSLLSEIPGSAEINGESAAGVVQDLKPPPPPSFSGPPWKFAPTDIIASDSAGEQDGASAKEVQTTPYHIETPSVAPVIRGEKVADFSPWMGNHPEDVLNEQTAKQGYYDRTQVSQNESNTARPSLYAQLKHRSGLQILSSVFAAALEKRQGHNMVTAPSTFKPPPRVTLTDNKREAWLRDLANPNVPLRKLSRTIPHGIRGRVLLDQCLTKWVPVGRAVWLAKCVGANEIRAFKRKGTSGALTIGLEAKWVRDWTANVQQFLEGVITSCGVADWKMKVTYAVNLTSRLFFEQLLDHDQYLEWFLTSLEAAPFNTLPVWLLMLGIYWSNILRYRKRGRRLAELLLDKLQLAIKSDSAPSLRPLIDRLSLHIRKLTLEHTSSMVLPQSWEKYKDLLSSCLNLNDNVHRTVFQILAERNARVQKPPKCEGTTQQPPQQRVIQLFDSICSSHDITSVSAASLRAIDDKAALVLKLLEWAATPFRYGVSRVYTGARLLRKWKIAGVDVDTCIISFLGESQMSDQLNMDNVYHIVSELVRSQTFSVGKYLQWLMAKGVADFSRSSDHQPLSGDLALLVQLPVSRLPEHVHNLRNTLLHRAGVEPSKEASTIAILKASIAERLPRIFGSVATSAVSCDPLPSDLTWTVKSELGQWIRRGVTEFGRDPRRAFQGLHSTTSAEHFALTPGEFYTVRDILESFGDLSILADVLKQATVCNDGIVLASAADTVNYHFRSFCVIGATTDLFKRLVEAYARLKRLGSTSLDLIFSLIDLGLRLPGELNTVALLRQDLSRIESKSSMAAPSPLSDHIPSSFNENDPLFLLKLDQLLSSASGIDESTLDTIFNVLIKQLESSGGHAKFSVNEICRYLSYLRPFHPKRFDTMIVRWVCGLLRSSTGGILSQVLPPLIGVGCVTIQAFVFLVRRLLKSDNKISNQRDLRIDLLQLLVPPPAGQSRYFDLVTYRFHLSRKEFLFKHPEEAFDIIRDAIALIDSESQEGNYRQVDLGHSAMVLLQILLTKNPESAVRHCSEKLIGQHPSAVTVLTRALDSLLGLDSKAGGHLFTSNDTFIFIPIDTGPATPDISVAEKVIELTNDFSLPFCQLKLQLLFNAESKGNVRNEIVDVMFKAAVADSRSRRSNWVGLVSLMSHDAVRQVKCHDIRERAEKNFFATPLFEESPDGCSSFAADNSSSLEAAKLYLAIIEKLAYSIPDVGPQAVVPVLTEKLDLLLQRLISMQASCSGTTELSHGVDAEQMIRSRTQFERALAFWFSALLRMIVLHRTAFSVPSAAVRPNALPEQTRLLISIFCISLARLPDSVLRLFPAADYFPHSMRAADCRPCPGILLQTHALDVAASLIDMFPDEARHQCARYLREKCPPFARVQNDSRFLYLLGPLGDSPSSNITLPVSIPSPAASGSTPAPTPSGNSTGGFSHPQQPAFVSGVPPGLPDGLNCAASHLCLQYRGRVIGAYPVRPWELLEDAAPIAGTNDTAVSLGYFDARRVRV.

Disordered stretches follow at residues Arg25–Ser114 and Pro1519–Phe1552. A compositionally biased stretch (polar residues) spans Glu40 to Gly51. Positions Val66 to Val80 are enriched in basic and acidic residues. A compositionally biased stretch (polar residues) spans Ser99–Pro111. Over residues Pro1523–Gly1543 the composition is skewed to low complexity.

This sequence belongs to the Mediator complex subunit 12 family. In terms of assembly, component of the srb8-11 complex, which itself associates with the Mediator complex.

The protein localises to the nucleus. Its function is as follows. Component of the srb8-11 complex. The srb8-11 complex is a regulatory module of the Mediator complex which is itself involved in regulation of basal and activated RNA polymerase II-dependent transcription. The srb8-11 complex may be involved in the transcriptional repression of a subset of genes regulated by Mediator. It may inhibit the association of the Mediator complex with RNA polymerase II to form the holoenzyme complex. This is Mediator of RNA polymerase II transcription subunit 12 (srb8) from Aspergillus fumigatus (strain ATCC MYA-4609 / CBS 101355 / FGSC A1100 / Af293) (Neosartorya fumigata).